An 802-amino-acid polypeptide reads, in one-letter code: Protein SBE22 (802 aa).

Disordered regions lie at residues 207-230 (SSTI…RSNS) and 323-345 (SGDP…QRHN).

This sequence belongs to the SBE2 family.

It localises to the cytoplasm. It is found in the golgi apparatus. In terms of biological role, with SBE2, is involved in cell wall integrity and polarity processes like bud growth. The protein is Protein SBE22 (SBE22) of Vanderwaltozyma polyspora (strain ATCC 22028 / DSM 70294 / BCRC 21397 / CBS 2163 / NBRC 10782 / NRRL Y-8283 / UCD 57-17) (Kluyveromyces polysporus).